The chain runs to 185 residues: MLEDVIKELREGIEKAIEALRRDLAKVRTGRANAAMLDGIRVDYYGVPTPIVQMATVSVPEPRLISVKPWEKNQVKAIEKAIRESDLGLNPQVDADLIRLPIPPLTEERRREMVKLTKKNGEDCKVAIRKHRRDANEMIDSLEKDGDVSGDEADRAKKKVDDVVAEGTKLVDTVIAGKEKDILDV.

The segment at 139–159 is disordered; sequence IDSLEKDGDVSGDEADRAKKK. Positions 141 to 159 are enriched in basic and acidic residues; it reads SLEKDGDVSGDEADRAKKK.

The protein belongs to the RRF family.

It localises to the cytoplasm. Responsible for the release of ribosomes from messenger RNA at the termination of protein biosynthesis. May increase the efficiency of translation by recycling ribosomes from one round of translation to another. The sequence is that of Ribosome-recycling factor from Sorangium cellulosum (strain So ce56) (Polyangium cellulosum (strain So ce56)).